We begin with the raw amino-acid sequence, 212 residues long: Large ribosomal subunit protein uL3 (212 aa).

Residues 117–142 (TSKGKGFQGNIKRHNQSRGPMTHGSR) are disordered.

It belongs to the universal ribosomal protein uL3 family. In terms of assembly, part of the 50S ribosomal subunit. Forms a cluster with proteins L14 and L19.

Its function is as follows. One of the primary rRNA binding proteins, it binds directly near the 3'-end of the 23S rRNA, where it nucleates assembly of the 50S subunit. The chain is Large ribosomal subunit protein uL3 from Acholeplasma laidlawii (strain PG-8A).